Here is a 63-residue protein sequence, read N- to C-terminus: Large ribosomal subunit protein uL29 (63 aa).

The protein belongs to the universal ribosomal protein uL29 family.

The sequence is that of Large ribosomal subunit protein uL29 from Caulobacter vibrioides (strain ATCC 19089 / CIP 103742 / CB 15) (Caulobacter crescentus).